The sequence spans 292 residues: MTTKFHTIGLIGKPHHPGTNQTLKRLHHWLTMQGYEVLVEERVATELGPHIVAVDLLEIGERCDLAIVVGGDGNMLGAARVLARFEVGVIGVNRGNLGFLTDLPPDAFEEALAKVLDGEFDTEHRFLLEAEVYRHGQLKASNTAVNEAVLHPGKIAHMIEFEVYIDNQFMYSQRADGMIVSTPTGSTAYALSAGGAILTPNLQALILVPMFPHTLSCRPIVVDACSTIKMVVSPENGENLEVSCDGHVHLAVLPGDEIIVRRSSEQLRLIHPKGHNYFHVLRSKLGWGSKLF.

The Proton acceptor role is filled by Asp-72. Residues 72-73 (DG), 146-147 (NE), His-157, Arg-174, Asp-176, and 187-192 (TAYALS) contribute to the NAD(+) site.

Belongs to the NAD kinase family. A divalent metal cation serves as cofactor.

It localises to the cytoplasm. The enzyme catalyses NAD(+) + ATP = ADP + NADP(+) + H(+). Involved in the regulation of the intracellular balance of NAD and NADP, and is a key enzyme in the biosynthesis of NADP. Catalyzes specifically the phosphorylation on 2'-hydroxyl of the adenosine moiety of NAD to yield NADP. This chain is NAD kinase, found in Shewanella oneidensis (strain ATCC 700550 / JCM 31522 / CIP 106686 / LMG 19005 / NCIMB 14063 / MR-1).